Consider the following 327-residue polypeptide: MAISILGAGAWGTAIAISLGSKKDVILWTRNETTFESINGKRESDKLPGCRISDNVSVKLAIEDTINASVTILAVPTQSLRKVCQQLHNCNLKKDVAIILACKGIEKSTLKLPSEIVNEILPNNPIAIFSGPSFAVEVARKLPYSMVLACQNNTLGSKLVSELQQENVKLEFSNDIIGVQICAALKNVFAIACGIVLGSKLGFNAHAALITKSMSEIKALYSAKIGDGSVDINTLLGPACLGDLIMTCTSLNSRNLSFGFKIGNSDNGFNVQQILSEGKSVIEGFSTAESIFNLAGKLKIKMPICEAVYRLLYESASIEDTISVLIS.

NADPH is bound by residues Trp-11, Arg-30, and Lys-103. Sn-glycerol 3-phosphate is bound by residues Lys-103, Gly-131, and Ser-133. Residue Ala-135 coordinates NADPH. Sn-glycerol 3-phosphate-binding residues include Lys-186, Asp-243, Ser-253, Arg-254, and Asn-255. Catalysis depends on Lys-186, which acts as the Proton acceptor. Arg-254 is a binding site for NADPH. Residues Val-281 and Glu-283 each coordinate NADPH.

Belongs to the NAD-dependent glycerol-3-phosphate dehydrogenase family.

Its subcellular location is the cytoplasm. The enzyme catalyses sn-glycerol 3-phosphate + NAD(+) = dihydroxyacetone phosphate + NADH + H(+). It catalyses the reaction sn-glycerol 3-phosphate + NADP(+) = dihydroxyacetone phosphate + NADPH + H(+). It participates in membrane lipid metabolism; glycerophospholipid metabolism. Functionally, catalyzes the reduction of the glycolytic intermediate dihydroxyacetone phosphate (DHAP) to sn-glycerol 3-phosphate (G3P), the key precursor for phospholipid synthesis. The polypeptide is Glycerol-3-phosphate dehydrogenase [NAD(P)+] (Wolbachia sp. subsp. Drosophila simulans (strain wRi)).